The chain runs to 249 residues: Protein TIFY 10B (249 aa).

Residues 113-148 (PESQSAPLTIFYGGRVMVFDDFSAEKAKEVIDLANK) form the Tify domain. Residues 204–229 (PIARRASLHRFLEKRKDRITSKAPYQ) carry the Jas motif. Positions 206–213 (ARRASLHR) match the Nuclear localization signal motif. Residues 225 to 249 (KAPYQIDGSAEASSKPTNPAWLSSR) form a disordered region. Over residues 235–249 (EASSKPTNPAWLSSR) the composition is skewed to polar residues.

This sequence belongs to the TIFY/JAZ family. As to quaternary structure, homo- and heterodimer. Interacts with COI1, MYC2, MYC3, MYC4, AFPH2/NINJA, TIFY10A/JAZ1, TIFY6B/JAZ3, TIFY11A/JAZ5, TIFY11B/JAZ6, TIFY5A/JAZ8, TIFY7/JAZ9, TIFY9/JAZ10, TIFY3A/JAZ11 and TIFY3B/JAZ12. Interacts with RHD6 and RSL1. (Microbial infection) Interacts with the pathogenic Pseudomonas syringae HopZ1a protein. Post-translationally, (Microbial infection) Acetylated by Pseudomonas syringae HopZ1a. Ubiquitinated. Targeted for degradation by the SCF(COI1) E3 ubiquitin ligase-proteasome pathway during jasmonate signaling. Expressed in cotyledons, hypocotyls, roots, sepals, petal vascular tissue and stigmas of developing flowers. Expressed in stamen filaments after jasmonic acid treatment.

It localises to the nucleus. In terms of biological role, repressor of jasmonate responses. Jasmonoyl-isoleucine (JA-Ile) specifically promotes COI1-TIFY10B/JAZ2 interaction. Activated by MYC2, MYC3 and MYC4 transcription factors. Interacts with and suppresses RHD6 and RSL1 transcription factor activities to negatively regulate jasmonate-stimulated root hair development. This Arabidopsis thaliana (Mouse-ear cress) protein is Protein TIFY 10B.